The chain runs to 255 residues: Large ribosomal subunit protein uL4 (255 aa).

This sequence belongs to the universal ribosomal protein uL4 family. In terms of assembly, part of the 50S ribosomal subunit.

Its function is as follows. One of the primary rRNA binding proteins, this protein initially binds near the 5'-end of the 23S rRNA. It is important during the early stages of 50S assembly. It makes multiple contacts with different domains of the 23S rRNA in the assembled 50S subunit and ribosome. Forms part of the polypeptide exit tunnel. The chain is Large ribosomal subunit protein uL4 from Thermococcus kodakarensis (strain ATCC BAA-918 / JCM 12380 / KOD1) (Pyrococcus kodakaraensis (strain KOD1)).